Consider the following 574-residue polypeptide: MYND-type zinc finger protein C31F10.10c (574 aa).

Disordered stretches follow at residues 207-253 (DSGD…QDPR) and 283-307 (MTTP…DEID). 2 stretches are compositionally biased toward polar residues: residues 243 to 253 (IYSNDSFQDPR) and 283 to 301 (MTTP…ASET). The MYND-type; degenerate zinc finger occupies 482–523 (NLLCNKWEEHSRQFAKCRRCRRTKYCSKECQHQAWPGHSRWC). Zn(2+) is bound by residues Cys498, Cys501, His519, and Cys523. Residues 534-574 (KRESSKINSVTESESTASPAASVIPVGTESVTSSTQSDSRL) are disordered. A compositionally biased stretch (low complexity) spans 542–556 (SVTESESTASPAASV). Residues 562–574 (ESVTSSTQSDSRL) show a composition bias toward polar residues.

This sequence belongs to the MUB1/samB family.

The protein localises to the nucleus. The protein resides in the cytoplasm. It is found in the cytoskeleton. Its subcellular location is the microtubule organizing center. It localises to the spindle pole body. The polypeptide is MYND-type zinc finger protein C31F10.10c (Schizosaccharomyces pombe (strain 972 / ATCC 24843) (Fission yeast)).